The chain runs to 173 residues: Mediator of RNA polymerase II transcription subunit 10 (173 aa).

Low complexity predominate over residues 1 to 10 (MVQQQQQSQQ). Residues 1–42 (MVQQQQQSQQRMMELHERNDREKLARKTEKEREEERRKQEDD) form a disordered region. A compositionally biased stretch (basic and acidic residues) spans 13 to 42 (MELHERNDREKLARKTEKEREEERRKQEDD).

Belongs to the Mediator complex subunit 10 family. As to quaternary structure, component of the Mediator complex.

It is found in the nucleus. In terms of biological role, component of the Mediator complex, a coactivator involved in the regulated transcription of nearly all RNA polymerase II-dependent genes. Mediator functions as a bridge to convey information from gene-specific regulatory proteins to the basal RNA polymerase II transcription machinery. Mediator is recruited to promoters by direct interactions with regulatory proteins and serves as a scaffold for the assembly of a functional preinitiation complex with RNA polymerase II and the general transcription factors. Required for germ cell development and for transcriptional activation of certain stage-specific inducible promoters. The polypeptide is Mediator of RNA polymerase II transcription subunit 10 (mdt-10) (Caenorhabditis elegans).